A 365-amino-acid chain; its full sequence is Ribosomal RNA large subunit methyltransferase M (365 aa).

Residues serine 187, 220–223, aspartate 239, aspartate 259, and aspartate 276 contribute to the S-adenosyl-L-methionine site; that span reads CPGG. Catalysis depends on lysine 305, which acts as the Proton acceptor.

This sequence belongs to the class I-like SAM-binding methyltransferase superfamily. RNA methyltransferase RlmE family. RlmM subfamily. In terms of assembly, monomer.

Its subcellular location is the cytoplasm. It carries out the reaction cytidine(2498) in 23S rRNA + S-adenosyl-L-methionine = 2'-O-methylcytidine(2498) in 23S rRNA + S-adenosyl-L-homocysteine + H(+). Functionally, catalyzes the 2'-O-methylation at nucleotide C2498 in 23S rRNA. The protein is Ribosomal RNA large subunit methyltransferase M of Psychromonas ingrahamii (strain DSM 17664 / CCUG 51855 / 37).